A 320-amino-acid polypeptide reads, in one-letter code: Ferrochelatase (320 aa).

The Fe cation site is built by His-194 and Glu-275.

This sequence belongs to the ferrochelatase family.

The protein resides in the cytoplasm. The catalysed reaction is heme b + 2 H(+) = protoporphyrin IX + Fe(2+). It participates in porphyrin-containing compound metabolism; protoheme biosynthesis; protoheme from protoporphyrin-IX: step 1/1. In terms of biological role, catalyzes the ferrous insertion into protoporphyrin IX. In Enterobacter sp. (strain 638), this protein is Ferrochelatase.